A 174-amino-acid chain; its full sequence is Co-chaperone protein HscB homolog (174 aa).

In terms of domain architecture, J spans 2-74 (NYFELFKFSP…IRRAEHMLSL (73 aa)).

The protein belongs to the HscB family. As to quaternary structure, interacts with HscA and stimulates its ATPase activity.

Functionally, co-chaperone involved in the maturation of iron-sulfur cluster-containing proteins. Seems to help targeting proteins to be folded toward HscA. This is Co-chaperone protein HscB homolog from Shewanella baltica (strain OS155 / ATCC BAA-1091).